A 687-amino-acid polypeptide reads, in one-letter code: Glycine--tRNA ligase beta subunit (687 aa).

The protein belongs to the class-II aminoacyl-tRNA synthetase family. Tetramer of two alpha and two beta subunits.

The protein localises to the cytoplasm. The catalysed reaction is tRNA(Gly) + glycine + ATP = glycyl-tRNA(Gly) + AMP + diphosphate. This chain is Glycine--tRNA ligase beta subunit, found in Neisseria meningitidis serogroup C / serotype 2a (strain ATCC 700532 / DSM 15464 / FAM18).